The chain runs to 361 residues: MKNLFLFCRAGFEKECAAEIQQRAGELNVGGFVKANNNDAYVVYQCFEEDAADTLVKQLPLDSLIFARQMFAASDLLVDLPESDRISPIVAALSDVSKAGEVRVETPDTNEAKELSAFCRKFTVPLRQHLKKSGSLLAQENPKRPIIHVCFIGPGRAYVGYSYSNNSSPHFMGIPRLKMAADAPSRSSLKLDEAFGQFVPKEEQEERIRSGMNAVDLGACPGGWTYQLVRRGMFVSAVDNGPMDEKLMETGQVKHYREDGFRFEPQRKNIYWLVCDMVEKPARVAELIEAWAINGWFKEAIFNLKLPMKSRYKEVTAILETMQTILKENGVTDFKVQCKHLYHDRDEVTVHLWLRPNTAWN.

S-adenosyl-L-methionine is bound by residues Ser-187, 220–223 (CPGG), Asp-239, Asp-259, and Asp-276. The Proton acceptor role is filled by Lys-305.

Belongs to the class I-like SAM-binding methyltransferase superfamily. RNA methyltransferase RlmE family. RlmM subfamily. Monomer.

It localises to the cytoplasm. It carries out the reaction cytidine(2498) in 23S rRNA + S-adenosyl-L-methionine = 2'-O-methylcytidine(2498) in 23S rRNA + S-adenosyl-L-homocysteine + H(+). In terms of biological role, catalyzes the 2'-O-methylation at nucleotide C2498 in 23S rRNA. In Shewanella putrefaciens (strain CN-32 / ATCC BAA-453), this protein is Ribosomal RNA large subunit methyltransferase M.